The primary structure comprises 204 residues: ATP phosphoribosyltransferase (204 aa).

The protein belongs to the ATP phosphoribosyltransferase family. Short subfamily. In terms of assembly, heteromultimer composed of HisG and HisZ subunits.

It is found in the cytoplasm. The catalysed reaction is 1-(5-phospho-beta-D-ribosyl)-ATP + diphosphate = 5-phospho-alpha-D-ribose 1-diphosphate + ATP. It functions in the pathway amino-acid biosynthesis; L-histidine biosynthesis; L-histidine from 5-phospho-alpha-D-ribose 1-diphosphate: step 1/9. Catalyzes the condensation of ATP and 5-phosphoribose 1-diphosphate to form N'-(5'-phosphoribosyl)-ATP (PR-ATP). Has a crucial role in the pathway because the rate of histidine biosynthesis seems to be controlled primarily by regulation of HisG enzymatic activity. This chain is ATP phosphoribosyltransferase, found in Staphylococcus epidermidis (strain ATCC 35984 / DSM 28319 / BCRC 17069 / CCUG 31568 / BM 3577 / RP62A).